A 343-amino-acid polypeptide reads, in one-letter code: MSCLPEPTVLTQLWVDNPPRYSQAQLQDYLKVIKLPQRFLNSAVLKDSSLAHTKEHGLPLLKAITRYHACNVPFENLELHYSAHKTITLDPVELFEKIVTRRRGGRCMENNTFLGTVFRSFGYEVRDCGGRVARAMSPYPDVRKNQAYTYDGWNHMLNLVYLEDEWYVVDVGMGSMGPNLPFPLRHGFETMSIAPRKIRLQRRPIAESHASNPTKGTELWCYDVCLKPTKDGTEVWIPTYAFTETEFLPQDYEVMSWFTSTNPRSFFTRYVTCTKMIQDEEKEEIIGNLTLFKDTIRETIGNQRKVVRECKTEEERIQALVEIFDVNLTDEEKNGLPEERRLA.

The active-site Acyl-thioester intermediate is the Cys-107. His-155 serves as the catalytic Proton acceptor. The active site involves Asp-170.

The protein belongs to the arylamine N-acetyltransferase family.

It participates in xenobiotic degradation. Its function is as follows. N-malonyltransferase; part of the Fusarium detoxification of benzoxazolinone cluster involved in the degradation of benzoxazolinones produced by the host plant. Maize, wheat, and rye produce the 2 benzoxazinone phytoanticipins 2,4-dihy-droxy-7-methoxy-1,4-benzoxazin-3-one (DIMBOA) and 2,4-dihydroxy-1,4-benzoxazin-3-one (DIBOA) that, due to their inherent instability once released, spontaneously degrade to the more stable corresponding benzoxazolinones, 6-methoxy-2-benzoxazolinone (MBOA) and 2-benzoxazolinone (BOA), respectively. The first step in the detoxification of benzoxazolinones involves the hydrolysis of the cyclic ester bond of benzoxazolinones by the gamma-lactamase FDB1 to aminophenols. FDB1 is able to convert BOA into 2-aminophenol (2-AP), as well as MBOA into 5-methoxy-2-aminophenol (2-AMP). The N-malonyltransferase FDB2 then metabolizes aminophenols via N-malonylation to non-toxic malonamic acids. FDB2 converts 2-AP into N-(2-hydroxyphenyl) malonamic acid (HPMA) and 2-AMP into N-(2-hydroxy-4-methoxyphenyl) malonamic acid (HMPMA). The cluster also contains 2 transcription factors (FDB3 and FPSE_08121), an aldo-keto reductase (FPSE_08125) that possibly associates with a ketone component of BOA and MBOA degradation, an esterase (FPSE_08126), an acyl-CoA transferase (FPSE_08120), a solute carrier protein (FPSE_08119) and a transmembrane transporter (FPSE_08127) proposed to shuttle metabolites of benzoxazolinone degradation. The polypeptide is N-malonyltransferase FDB2 (Fusarium pseudograminearum (strain CS3096) (Wheat and barley crown-rot fungus)).